The primary structure comprises 85 residues: U4-theraphotoxin-Hhn1u (85 aa).

The signal sequence occupies residues 1–22; that stretch reads MKMTLIAILTCAAVLVLHTTAA. Residues 23-48 constitute a propeptide that is removed on maturation; that stretch reads EELEAESQLMEVGMPDTELEAVDEER. 3 disulfides stabilise this stretch: C52–C66, C56–C77, and C71–C82.

The protein belongs to the neurotoxin 12 (Hwtx-2) family. 02 (Hwtx-2) subfamily. In terms of tissue distribution, expressed by the venom gland.

Its subcellular location is the secreted. Its function is as follows. Postsynaptic neurotoxin. The chain is U4-theraphotoxin-Hhn1u from Cyriopagopus hainanus (Chinese bird spider).